Here is a 449-residue protein sequence, read N- to C-terminus: Signal recognition particle protein (449 aa).

Residues glycine 109–threonine 116, aspartate 191–arginine 195, and serine 249–aspartate 252 each bind GTP.

This sequence belongs to the GTP-binding SRP family. SRP54 subfamily. In terms of assembly, part of the signal recognition particle protein translocation system, which is composed of SRP and FtsY. SRP is a ribonucleoprotein composed of Ffh and a 4.5S RNA molecule.

The protein localises to the cytoplasm. It carries out the reaction GTP + H2O = GDP + phosphate + H(+). Involved in targeting and insertion of nascent membrane proteins into the cytoplasmic membrane. Binds to the hydrophobic signal sequence of the ribosome-nascent chain (RNC) as it emerges from the ribosomes. The SRP-RNC complex is then targeted to the cytoplasmic membrane where it interacts with the SRP receptor FtsY. Interaction with FtsY leads to the transfer of the RNC complex to the Sec translocase for insertion into the membrane, the hydrolysis of GTP by both Ffh and FtsY, and the dissociation of the SRP-FtsY complex into the individual components. The protein is Signal recognition particle protein of Rickettsia prowazekii (strain Madrid E).